Here is a 570-residue protein sequence, read N- to C-terminus: Nucleoprotein (570 aa).

The binding site for the cap structure m7GTP stretch occupies residues 54 to 236 (LRKTKRTDDD…ITKEESSINI (183 aa)). The interval 332–356 (DLTKKPDAVPEPGAAPRPAERKGQN) is disordered. Residues aspartate 386 and glutamate 388 each contribute to the Mg(2+) site. Residues aspartate 386 and glutamate 388 each coordinate Mn(2+). Positions 396, 503, 506, and 531 each coordinate Zn(2+). Residue aspartate 535 participates in Mg(2+) binding. Residue aspartate 535 coordinates Mn(2+).

The protein belongs to the arenaviridae nucleocapsid protein family. Homomultimerizes to form the nucleocapsid. Binds to viral genomic RNA. Interacts with glycoprotein G2. Interacts with protein Z; this interaction probably directs the encapsidated genome to budding sites. Interacts with protein L; this interaction does not interfere with Z-L interaction. Interacts with host IKBKE (via Protein kinase domain); the interaction inhibits IKBKE kinase activity.

It localises to the virion. The protein resides in the host cytoplasm. Functionally, encapsidates the genome, protecting it from nucleases. The encapsidated genomic RNA is termed the nucleocapsid (NC). Serves as template for viral transcription and replication. The increased presence of protein N in host cell does not seem to trigger the switch from transcription to replication as observed in other negative strain RNA viruses. Through the interaction with host IKBKE, strongly inhibits the phosphorylation and nuclear translocation of host IRF3, a protein involved in interferon activation pathway, leading to the inhibition of interferon-beta and IRF3-dependent promoters activation. Also encodes a functional 3'-5' exoribonuclease that degrades preferentially dsRNA substrates and thereby participates in the suppression of interferon induction. The polypeptide is Nucleoprotein (Artibeus (neotropical fruit bats)).